Consider the following 184-residue polypeptide: Bifunctional protein PyrR (184 aa).

The PRPP-binding motif lies at 98–110; the sequence is VVLVDDVLYTGRT.

It belongs to the purine/pyrimidine phosphoribosyltransferase family. PyrR subfamily.

It carries out the reaction UMP + diphosphate = 5-phospho-alpha-D-ribose 1-diphosphate + uracil. Regulates the transcription of the pyrimidine nucleotide (pyr) operon in response to exogenous pyrimidines. In terms of biological role, also displays a weak uracil phosphoribosyltransferase activity which is not physiologically significant. In Roseiflexus castenholzii (strain DSM 13941 / HLO8), this protein is Bifunctional protein PyrR.